We begin with the raw amino-acid sequence, 194 residues long: Pyridoxal 5'-phosphate synthase subunit PdxT (194 aa).

An L-glutamine-binding site is contributed by 50–52 (GES). The active-site Nucleophile is the C82. L-glutamine is bound by residues R109 and 136-137 (IR). Catalysis depends on charge relay system residues H172 and E174.

This sequence belongs to the glutaminase PdxT/SNO family. In terms of assembly, in the presence of PdxS, forms a dodecamer of heterodimers. Only shows activity in the heterodimer.

The catalysed reaction is aldehydo-D-ribose 5-phosphate + D-glyceraldehyde 3-phosphate + L-glutamine = pyridoxal 5'-phosphate + L-glutamate + phosphate + 3 H2O + H(+). It catalyses the reaction L-glutamine + H2O = L-glutamate + NH4(+). It participates in cofactor biosynthesis; pyridoxal 5'-phosphate biosynthesis. Functionally, catalyzes the hydrolysis of glutamine to glutamate and ammonia as part of the biosynthesis of pyridoxal 5'-phosphate. The resulting ammonia molecule is channeled to the active site of PdxS. This Streptococcus pneumoniae (strain CGSP14) protein is Pyridoxal 5'-phosphate synthase subunit PdxT.